The chain runs to 101 residues: NADH-quinone oxidoreductase subunit K (101 aa).

3 consecutive transmembrane segments (helical) span residues 4 to 24 (LSHYLVLGALLFAIGVVGIFL), 30 to 50 (IILLMSIELMLLAVNMNFVAF), and 61 to 81 (IFVFFILTVAAAEAAIGLAIL).

It belongs to the complex I subunit 4L family. NDH-1 is composed of 14 different subunits. Subunits NuoA, H, J, K, L, M, N constitute the membrane sector of the complex.

The protein resides in the cell inner membrane. The catalysed reaction is a quinone + NADH + 5 H(+)(in) = a quinol + NAD(+) + 4 H(+)(out). Functionally, NDH-1 shuttles electrons from NADH, via FMN and iron-sulfur (Fe-S) centers, to quinones in the respiratory chain. The immediate electron acceptor for the enzyme in this species is believed to be ubiquinone. Couples the redox reaction to proton translocation (for every two electrons transferred, four hydrogen ions are translocated across the cytoplasmic membrane), and thus conserves the redox energy in a proton gradient. The sequence is that of NADH-quinone oxidoreductase subunit K from Nitrosomonas europaea (strain ATCC 19718 / CIP 103999 / KCTC 2705 / NBRC 14298).